The following is a 115-amino-acid chain: uncharacterized protein (115 aa).

This is an uncharacterized protein from Aquifex aeolicus (strain VF5).